The following is a 295-amino-acid chain: tRNA pseudouridine synthase B (295 aa).

Asp42 serves as the catalytic Nucleophile.

Belongs to the pseudouridine synthase TruB family. Type 1 subfamily.

The enzyme catalyses uridine(55) in tRNA = pseudouridine(55) in tRNA. Responsible for synthesis of pseudouridine from uracil-55 in the psi GC loop of transfer RNAs. The chain is tRNA pseudouridine synthase B from Cutibacterium acnes (strain DSM 16379 / KPA171202) (Propionibacterium acnes).